We begin with the raw amino-acid sequence, 61 residues long: Large ribosomal subunit protein uL30 (61 aa).

The protein belongs to the universal ribosomal protein uL30 family. In terms of assembly, part of the 50S ribosomal subunit.

This Thermobifida fusca (strain YX) protein is Large ribosomal subunit protein uL30.